We begin with the raw amino-acid sequence, 386 residues long: 5-amino-6-(D-ribitylamino)uracil--L-tyrosine 4-hydroxyphenyl transferase (386 aa).

Residues 56-303 form the Radical SAM core domain; the sequence is VSYVINRNLN…MAVARLYLGD (248 aa). Positions 70, 74, and 77 each coordinate [4Fe-4S] cluster.

The protein belongs to the radical SAM superfamily. CofH family. In terms of assembly, consists of two subunits, CofG and CofH. Requires [4Fe-4S] cluster as cofactor.

It carries out the reaction 5-amino-6-(D-ribitylamino)uracil + L-tyrosine + S-adenosyl-L-methionine = 5-amino-5-(4-hydroxybenzyl)-6-(D-ribitylimino)-5,6-dihydrouracil + 2-iminoacetate + 5'-deoxyadenosine + L-methionine + H(+). It participates in cofactor biosynthesis; coenzyme F0 biosynthesis. Functionally, catalyzes the radical-mediated synthesis of 5-amino-5-(4-hydroxybenzyl)-6-(D-ribitylimino)-5,6-dihydrouracil from 5-amino-6-(D-ribitylamino)uracil and L-tyrosine. This chain is 5-amino-6-(D-ribitylamino)uracil--L-tyrosine 4-hydroxyphenyl transferase, found in Synechococcus elongatus (strain ATCC 33912 / PCC 7942 / FACHB-805) (Anacystis nidulans R2).